The chain runs to 371 residues: Cytochrome b (371 aa).

4 helical membrane passes run 25–45 (FGSM…FLAV), 69–90 (WMMQ…YTHI), 105–125 (WLSG…GYVL), and 170–190 (FFAL…LHIM). Heme b-binding residues include His-75 and His-89. His-174 and His-188 together coordinate heme b. An a ubiquinone-binding site is contributed by His-193. The next 4 helical transmembrane spans lie at 218-238 (YKDM…VAFF), 280-300 (LGGA…PFTH), 312-332 (IMQL…WAAT), and 339-358 (FTTI…ITNP).

It belongs to the cytochrome b family. In terms of assembly, the cytochrome bc1 complex contains 3 respiratory subunits (MT-CYB, CYC1 and UQCRFS1), 2 core proteins (UQCRC1 and UQCRC2) and probably 6 low-molecular weight proteins. It depends on heme b as a cofactor.

The protein localises to the mitochondrion inner membrane. In terms of biological role, component of the ubiquinol-cytochrome c reductase complex (complex III or cytochrome b-c1 complex) that is part of the mitochondrial respiratory chain. The b-c1 complex mediates electron transfer from ubiquinol to cytochrome c. Contributes to the generation of a proton gradient across the mitochondrial membrane that is then used for ATP synthesis. The sequence is that of Cytochrome b (MT-CYB) from Eryx colubrinus colubrinus.